A 321-amino-acid polypeptide reads, in one-letter code: NADH-ubiquinone oxidoreductase chain 1 (321 aa).

The next 8 membrane-spanning stretches (helical) occupy residues 9 to 29 (ITNS…LTLL), 75 to 95 (ILFT…WAPM), 106 to 126 (LGLL…LWSG), 151 to 171 (TLGL…LMLF), 177 to 197 (HMWL…STLA), 219 to 239 (VEFS…NILF), 256 to 276 (PQLF…LFLW), and 297 to 317 (YLPL…ALCG).

This sequence belongs to the complex I subunit 1 family.

It is found in the mitochondrion inner membrane. It carries out the reaction a ubiquinone + NADH + 5 H(+)(in) = a ubiquinol + NAD(+) + 4 H(+)(out). In terms of biological role, core subunit of the mitochondrial membrane respiratory chain NADH dehydrogenase (Complex I) that is believed to belong to the minimal assembly required for catalysis. Complex I functions in the transfer of electrons from NADH to the respiratory chain. The immediate electron acceptor for the enzyme is believed to be ubiquinone. The chain is NADH-ubiquinone oxidoreductase chain 1 (MT-ND1) from Lycodon semicarinatus (Ryukyu odd-tooth snake).